The primary structure comprises 1259 residues: Translocation and assembly module subunit TamB (1259 aa).

An N-formylmethionine modification is found at Met-1. Residues 1–6 are Cytoplasmic-facing; sequence MSLWKK. Residues 7–27 traverse the membrane as a helical; Signal-anchor for type II membrane protein segment; it reads ISLGVVIVILLLLGSVAFLVG. The Periplasmic portion of the chain corresponds to 28–1259; the sequence is TTSGLHLVFK…ALDLLYQFEF (1232 aa).

It belongs to the TamB family. Interacts with TamA to form the translocation and assembly module (TAM).

Its subcellular location is the cell inner membrane. Component of the translocation and assembly module (TAM), which facilitates the insertion and assembly of specific beta-barrel proteins into the outer membrane. Promotes the assembly and secretion across the outer membrane of a subset of autotransporters, such as Ag43. Involved in the assembly of the outer membrane usher protein FimD. In vitro, when TAM is reconstituted into preformed liposomes, it can promote the assembly of several outer membrane proteins, including OmpA, EspP, Ag43 and FadL. TamA is sufficient to catalyze a low level of outer membrane protein (OMP) assembly, but both TamA and TamB are required for efficient OMP assembly. TamB may regulate TamA activity. It could regulate conformational changes in TamA to drive its function in OMP assembly. It could also act as a chaperone that facilitate the transport of nascent membrane proteins across the periplasm to TamA in the outer membrane. Functionally, in addition, is involved in outer membrane lipid homeostasis. Likely transports phospholipids between the inner membrane and the outer membrane. It would provide a bridge-like structure that protects phospholipids as they travel across the periplasm. One possible explanation for the apparent dual function of TAM is that TamB is a somewhat generic transporter of hydrophobic molecules. In terms of biological role, tamB, YdbH and YhdP are redundant, but not equivalent, in performing an essential function for growth and maintaining lipid homeostasis in the outer membrane. The transport functions of TamB and YhdP could be differentiated according to the fatty acid saturation state of the phospholipids, with TamB transporting more unsaturated phospholipids and YhdP more saturated phospholipids. Any of these three proteins is sufficient for growth. The protein is Translocation and assembly module subunit TamB of Escherichia coli (strain K12).